A 66-amino-acid chain; its full sequence is Large ribosomal subunit protein bL33c (66 aa).

Belongs to the bacterial ribosomal protein bL33 family.

The protein localises to the plastid. The protein resides in the chloroplast. This chain is Large ribosomal subunit protein bL33c, found in Manihot esculenta (Cassava).